Reading from the N-terminus, the 319-residue chain is Plasmodesmata-located protein 4 (319 aa).

A signal peptide spans Met-1–Thr-26. Over Ser-27–Ser-288 the chain is Extracellular. 6 disulfide bridges follow: Cys-39-Cys-127, Cys-103-Cys-112, Cys-115-Cys-140, Cys-177-Cys-247, Cys-223-Cys-232, and Cys-235-Cys-260. 2 consecutive Gnk2-homologous domains span residues Asn-45–Ile-149 and His-170–His-269. Residues Leu-289–Leu-309 form a helical membrane-spanning segment. The segment at Leu-289–Leu-309 is necessary and sufficient for plasmodesmal targeting. Residues Lys-310–Cys-319 are Cytoplasmic-facing.

The protein belongs to the cysteine-rich repeat secretory protein family. Plasmodesmata-located proteins (PDLD) subfamily. In terms of assembly, (Microbial infection) Interacts with Grapevine fanleaf virus (GFLV) 2B-MP. In terms of tissue distribution, highly expressed in seeds and roots.

The protein localises to the cell membrane. Its subcellular location is the cell junction. It localises to the plasmodesma. Modulates cell-to-cell trafficking. This Arabidopsis thaliana (Mouse-ear cress) protein is Plasmodesmata-located protein 4.